The following is a 251-amino-acid chain: Aquaporin (251 aa).

Residues 1–11 (MAKEALKTLQS) are Cytoplasmic-facing. A helical transmembrane segment spans residues 12 to 32 (MFGEMVASFVFGFAVYSAILG). The Extracellular segment spans residues 33-42 (SSISQSSADK). A helical transmembrane segment spans residues 43–63 (VIVGLTVGFSGIGVIYSFCDV). The Cytoplasmic portion of the chain corresponds to 64–86 (TIAHFNPAITLAAILTSKIDVLQ). An NPA motif is present at residues 69–71 (NPA). Residues 87 to 107 (GLGYMLAQYIGFMLAVCALLV) traverse the membrane as a helical segment. The Extracellular portion of the chain corresponds to 108 to 133 (CSPVEYKETLDTIRPGPTDFGATSLN). Residues 134-154 (VFFAEFFLTAIFVHIVFATAV) traverse the membrane as a helical segment. Over 155–179 (NPYKPKVDTEGKFVDPDEKEPVDRR) the chain is Cytoplasmic. Residues 180-200 (ITAPLCIGLTLGFLAFMGLAS) form a helical membrane-spanning segment. At 201–224 (SGGAFNPGLTFAPMAMSNTWSHFW) the chain is on the extracellular side. The short motif at 206–208 (NPG) is the NPG element. Residues 225-245 (IYLGGQYLGGLTGGLLQVLVL) traverse the membrane as a helical segment. Topologically, residues 246-251 (YKLSSD) are cytoplasmic.

The protein belongs to the MIP/aquaporin (TC 1.A.8) family.

Its subcellular location is the cell membrane. Functionally, water channel required to facilitate the transport of water across membranes. Involved in osmotolerance. This Encephalitozoon intestinalis (Microsporidian parasite) protein is Aquaporin (AQP).